We begin with the raw amino-acid sequence, 344 residues long: MKPKFLFEQLLSRQDLSSDQMQEVIHACMTGEFSDVQIATFLALMRMKGETVNELTAAAKVMRQLAHKIDLGNPLIDIVGTGGDGRNTFNVSTACSFVVAAAGIKVAKHGNRSVSSRSGSADLLEQAGFILNLSDSQVQNCINQCQLAFLFAPHYHPAMQHARAARQQLGIRTLFNLLGPLINPAQVKRQVVGVFSTNWLKTIATVLANLGSERSLVISSQDGLDEISIAAKSEVVEYRDGNFKQWFISPEDYGLKHSSLDAIIVDSPEQSLHLIQSVLSGDSGPARDIVLLNSAAAIYCAKDGISFDAAIEEARIAIDNGKANLCFNKLRLLTQTLNKESNHE.

Residues Gly-80, 83-84 (GD), Thr-88, 90-93 (NVST), 108-116 (KHGNRSVSS), and Ser-120 each bind 5-phospho-alpha-D-ribose 1-diphosphate. Gly-80 is an anthranilate binding site. Ser-92 provides a ligand contact to Mg(2+). Asn-111 is a binding site for anthranilate. Residue Arg-166 coordinates anthranilate. Asp-225 and Glu-226 together coordinate Mg(2+).

This sequence belongs to the anthranilate phosphoribosyltransferase family. Homodimer. The cofactor is Mg(2+).

It carries out the reaction N-(5-phospho-beta-D-ribosyl)anthranilate + diphosphate = 5-phospho-alpha-D-ribose 1-diphosphate + anthranilate. It participates in amino-acid biosynthesis; L-tryptophan biosynthesis; L-tryptophan from chorismate: step 2/5. Catalyzes the transfer of the phosphoribosyl group of 5-phosphorylribose-1-pyrophosphate (PRPP) to anthranilate to yield N-(5'-phosphoribosyl)-anthranilate (PRA). The sequence is that of Anthranilate phosphoribosyltransferase from Legionella pneumophila (strain Lens).